We begin with the raw amino-acid sequence, 458 residues long: Acyl-CoA-binding domain-containing protein 5 (458 aa).

An ACB domain is found at 8–97 (HQTRFEAAVS…MKKILETMPV (90 aa)). An acyl-CoA contacts are provided by residues 19–28 (IQSLPKNGSF), 39–43 (YSFYK), K65, and Y84. Disordered regions lie at residues 119–248 (KHGR…REED) and 296–369 (TETS…GPNG). The segment covering 125–139 (GVTSELGSVLTSTPN) has biased composition (polar residues). The stretch at 154–188 (AESDEEQAATKEVREEDEEEESEHSEQEDKDVEQQ) forms a coiled coil. Basic and acidic residues-rich tracts occupy residues 177-195 (HSEQ…EKPA), 303-313 (ELKDGGEDGKQ), and 322-338 (TWSE…ERPS). Residues 343-356 (GGDGSRSGQIGSGG) are compositionally biased toward gly residues. Residues 373–402 (EQIAVVLMRLQEDMQNVLQRLHSLEVQTAS) are a coiled coil. The helical transmembrane segment at 430 to 450 (GTLALAVVWPFVVHWLMHVFL) threads the bilayer.

It belongs to the ATG37 family.

It is found in the peroxisome membrane. In terms of biological role, acyl-CoA binding protein which acts as the peroxisome receptor for pexophagy but is dispensable for aggrephagy and nonselective autophagy. Binds medium- and long-chain acyl-CoA esters. This chain is Acyl-CoA-binding domain-containing protein 5 (acbd5), found in Xenopus tropicalis (Western clawed frog).